A 577-amino-acid polypeptide reads, in one-letter code: Acyl-coenzyme A synthetase ACSM2A, mitochondrial (577 aa).

Residues 1-46 (MHWLRKVQGLCTLWGTQMSSRTLYINSRQLVSLQWGHQEVPAKFNF) constitute a mitochondrion transit peptide. Residue glutamine 139 coordinates CoA. ATP is bound by residues 221–229 (TSGTSGLPK), 359–364 (ESYGQT), aspartate 446, and arginine 461. Residue threonine 364 participates in substrate binding. Residue 469-471 (SGY) participates in CoA binding. Residue arginine 472 coordinates substrate. Residue arginine 501 participates in CoA binding. A Phosphoserine modification is found at serine 513. CoA contacts are provided by residues lysine 532 and 540 to 542 (YPR). Lysine 557 is an ATP binding site.

Belongs to the ATP-dependent AMP-binding enzyme family. As to quaternary structure, monomer. Mg(2+) serves as cofactor. Requires Mn(2+) as cofactor.

Its subcellular location is the mitochondrion. It carries out the reaction a medium-chain fatty acid + ATP + CoA = a medium-chain fatty acyl-CoA + AMP + diphosphate. It catalyses the reaction benzoate + ATP + CoA = benzoyl-CoA + AMP + diphosphate. The catalysed reaction is hexanoate + ATP + CoA = hexanoyl-CoA + AMP + diphosphate. The enzyme catalyses butanoate + ATP + CoA = butanoyl-CoA + AMP + diphosphate. It carries out the reaction octanoate + ATP + CoA = octanoyl-CoA + AMP + diphosphate. It catalyses the reaction decanoate + ATP + CoA = decanoyl-CoA + AMP + diphosphate. Its function is as follows. Catalyzes the activation of fatty acids by CoA to produce an acyl-CoA, the first step in fatty acid metabolism. Capable of activating medium-chain fatty acids (e.g. butyric (C4) to decanoic (C10) acids), and certain carboxylate-containing xenobiotics, e.g. benzoate. The protein is Acyl-coenzyme A synthetase ACSM2A, mitochondrial (ACSM2A) of Homo sapiens (Human).